Reading from the N-terminus, the 380-residue chain is Probable protein phosphatase 2C 27 (380 aa).

The PPM-type phosphatase domain maps to 84-344 (RSGSCAEQGA…DNLTVIVVCF (261 aa)). Mn(2+) is bound by residues aspartate 128, glycine 129, aspartate 292, and aspartate 335.

Belongs to the PP2C family. The cofactor is Mg(2+). Requires Mn(2+) as cofactor. Expressed in roots, leaves, stems, flower, and trichomes.

The protein resides in the nucleus. It localises to the cytoplasm. The enzyme catalyses O-phospho-L-seryl-[protein] + H2O = L-seryl-[protein] + phosphate. The catalysed reaction is O-phospho-L-threonyl-[protein] + H2O = L-threonyl-[protein] + phosphate. In terms of biological role, confers salt tolerance by triggering the expression of stress-responsive genes. This chain is Probable protein phosphatase 2C 27, found in Arabidopsis thaliana (Mouse-ear cress).